The primary structure comprises 235 residues: Auracyanin-B (235 aa).

Residues 1 to 21 (MSWRGSGRSNFRSRSSSNGGS) are compositionally biased toward low complexity. 2 disordered regions span residues 1–27 (MSWR…SGGS) and 64–107 (ATPR…NVVN). The signal sequence occupies residues 1-56 (MSWRGSGRSNFRSRSSSNGGSTFSGGSAGGPPLIVMMGLAFGAGLIMLIVMIASNA). A propeptide spanning residues 57 to 80 (TAGGFVAATPRPTATPRPTAAPAP) is cleaved from the precursor. The segment covering 69 to 86 (TATPRPTAAPAPTQPPAA) has biased composition (pro residues). The span at 87 to 100 (QPTTAPATQAANAP) shows a compositional bias: low complexity. Residues 111-235 (AQTVEVRAAP…GMKGTLTVTP (125 aa)) enclose the Plastocyanin-like domain. Residues His-152, Cys-217, His-222, and Met-227 each contribute to the Cu cation site.

It belongs to the multicopper oxidase family. Cu cation is required as a cofactor. In terms of processing, glycosylated.

It localises to the cell membrane. Functionally, probably a soluble electron acceptor for the integral membrane protein electron transfer alternative complex III (ACIII). This chain is Auracyanin-B, found in Chloroflexus aurantiacus (strain ATCC 29366 / DSM 635 / J-10-fl).